The following is a 253-amino-acid chain: Imidazole glycerol phosphate synthase subunit HisF (253 aa).

Catalysis depends on residues aspartate 11 and aspartate 130.

Belongs to the HisA/HisF family. Heterodimer of HisH and HisF.

It is found in the cytoplasm. It catalyses the reaction 5-[(5-phospho-1-deoxy-D-ribulos-1-ylimino)methylamino]-1-(5-phospho-beta-D-ribosyl)imidazole-4-carboxamide + L-glutamine = D-erythro-1-(imidazol-4-yl)glycerol 3-phosphate + 5-amino-1-(5-phospho-beta-D-ribosyl)imidazole-4-carboxamide + L-glutamate + H(+). Its pathway is amino-acid biosynthesis; L-histidine biosynthesis; L-histidine from 5-phospho-alpha-D-ribose 1-diphosphate: step 5/9. In terms of biological role, IGPS catalyzes the conversion of PRFAR and glutamine to IGP, AICAR and glutamate. The HisF subunit catalyzes the cyclization activity that produces IGP and AICAR from PRFAR using the ammonia provided by the HisH subunit. The protein is Imidazole glycerol phosphate synthase subunit HisF of Geobacter metallireducens (strain ATCC 53774 / DSM 7210 / GS-15).